The sequence spans 423 residues: Cyclin-dependent kinase 14 (423 aa).

A disordered region spans residues 62-85 (VGKESPKVRRHSSPSSPTSPKFGK). The Protein kinase domain occupies 89 to 373 (YEKLEKLGEG…AQAALNHDYF (285 aa)). Residues 95–103 (LGEGSYATV) and Lys118 each bind ATP. Asp210 serves as the catalytic Proton acceptor.

Belongs to the protein kinase superfamily. CMGC Ser/Thr protein kinase family. CDC2/CDKX subfamily. In terms of assembly, interacts with ccny; ccny mediates its recruitment to the plasma membrane and promotes phosphorylation of lrp6.

It localises to the cell membrane. The catalysed reaction is L-seryl-[protein] + ATP = O-phospho-L-seryl-[protein] + ADP + H(+). It carries out the reaction L-threonyl-[protein] + ATP = O-phospho-L-threonyl-[protein] + ADP + H(+). Functionally, serine/threonine-protein kinase involved in the control of the eukaryotic cell cycle, whose activity is controlled by an associated cyclin. Acts as a cell-cycle regulator of Wnt signaling pathway during G2/M phase by mediating the phosphorylation of lrp6, leading to the activation of the Wnt signaling pathway. The protein is Cyclin-dependent kinase 14 (cdk14) of Xenopus tropicalis (Western clawed frog).